Reading from the N-terminus, the 455-residue chain is Vimentin (455 aa).

The segment at 1–87 (MASRTNTSSY…GLADAINTEF (87 aa)) is head. Positions 87-122 (FKTNRTNEKAEMQHLNDRFASYIDKVRFLEQQNKIL) form a coiled coil. Residues 88–122 (KTNRTNEKAEMQHLNDRFASYIDKVRFLEQQNKIL) form a coil 1A region. In terms of domain architecture, IF rod spans 94–402 (EKAEMQHLND…KLLEGEESRI (309 aa)). A linker 1 region spans residues 123-144 (IAELEQMRGKGSSRVGDLYQDE). The stretch at 145–236 (MRELRRQVDQ…KLHDEELAEL (92 aa)) forms a coiled coil. Residues 145 to 236 (MRELRRQVDQ…KLHDEELAEL (92 aa)) are coil 1B. The tract at residues 237 to 259 (QIQIQEQHVQIDMEVAKPDLTAA) is linker 12. Positions 260–398 (LKDVRQQYET…ATYRKLLEGE (139 aa)) are coil 2. The stretch at 294-398 (ARNNEAIRLA…ATYRKLLEGE (105 aa)) forms a coiled coil. A tail region spans residues 399–455 (ESRITTPFPNLSSLTLRETMKETRPAMDSLSKKVVIKTIETRDGHIINESSQNDDLE).

It belongs to the intermediate filament family. As to quaternary structure, homomer assembled from elementary dimers. One of the most prominent phosphoproteins in various cells of mesenchymal origin. Phosphorylation is enhanced during cell division, at which time vimentin filaments are significantly reorganized.

Its subcellular location is the cytoplasm. It localises to the cytoskeleton. It is found in the nucleus matrix. Vimentins are class-III intermediate filaments found in various non-epithelial cells, especially mesenchymal cells. Vimentin is attached to the nucleus, endoplasmic reticulum, and mitochondria, either laterally or terminally. The protein is Vimentin (vim) of Cyprinus carpio (Common carp).